Reading from the N-terminus, the 610-residue chain is Autophagy-related protein 22-1 (610 aa).

The segment at Met1 to Pro29 is disordered. Residues Tyr41 to Leu61 traverse the membrane as a helical segment. An N-linked (GlcNAc...) asparagine glycan is attached at Asn90. A run of 3 helical transmembrane segments spans residues Ser120–Phe140, Leu153–Pro173, and Ile177–Leu197. The disordered stretch occupies residues Lys216 to Asn242. Positions Gly229–Arg239 are enriched in polar residues. A run of 4 helical transmembrane segments spans residues Gly277–Phe297, Thr310–Val330, Val379–Thr399, and Val415–Val435. Asn445 is a glycosylation site (N-linked (GlcNAc...) asparagine). 4 helical membrane-spanning segments follow: residues Leu450–Val470, Phe485–Gly507, Lys527–Val547, and Gly550–Ala570. The tract at residues Lys586–Pro610 is disordered. An N-linked (GlcNAc...) asparagine glycan is attached at Asn591.

It belongs to the ATG22 family.

The protein localises to the vacuole membrane. In terms of biological role, vacuolar effluxer which mediate the efflux of amino acids resulting from autophagic degradation. The release of autophagic amino acids allows the maintenance of protein synthesis and viability during nitrogen starvation. The chain is Autophagy-related protein 22-1 (atg22-1) from Aspergillus clavatus (strain ATCC 1007 / CBS 513.65 / DSM 816 / NCTC 3887 / NRRL 1 / QM 1276 / 107).